Here is a 344-residue protein sequence, read N- to C-terminus: Secreted LysM effector LysM2 (344 aa).

The N-terminal stretch at 1 to 24 (MMAPKSLQTGLLILLLAKLKLAWG) is a signal peptide. The 45-residue stretch at 36–80 (YEAAASSGDTCTSFAAEWGLTEETFASLNPSAACPSLVAGQNYCM) folds into the LysM 1 domain. Positions 88 to 134 (STTSSSSSTTSSSTTSSSTTSSSTTSSSTTTSSFTTTTASETTSTAA) are enriched in low complexity. The disordered stretch occupies residues 88 to 141 (STTSSSSSTTSSSTTSSSTTSSSTTSSSTTTSSFTTTTASETTSTAANGVTTPM). LysM domains lie at 153–199 (KFDL…YVCV), 216–262 (KFDL…YVCV), and 296–342 (KFWL…YICV).

The protein belongs to the secreted LysM effector family.

Might have a role in sequestration of chitin oligosaccharides (breakdown products of fungal cell walls that are released during invasion and act as triggers of host immunity) to dampen host defense. The chain is Secreted LysM effector LysM2 from Penicillium expansum (Blue mold rot fungus).